The primary structure comprises 578 residues: Sulfite reductase [NADPH] hemoprotein beta-component (578 aa).

The interval Met1–Leu21 is disordered. Residues Cys443, Cys449, Cys488, and Cys492 each contribute to the [4Fe-4S] cluster site. Cys492 contacts siroheme.

It belongs to the nitrite and sulfite reductase 4Fe-4S domain family. Alpha(8)-beta(8). The alpha component is a flavoprotein, the beta component is a hemoprotein. Siroheme serves as cofactor. [4Fe-4S] cluster is required as a cofactor.

The enzyme catalyses hydrogen sulfide + 3 NADP(+) + 3 H2O = sulfite + 3 NADPH + 4 H(+). It participates in sulfur metabolism; hydrogen sulfide biosynthesis; hydrogen sulfide from sulfite (NADPH route): step 1/1. In terms of biological role, component of the sulfite reductase complex that catalyzes the 6-electron reduction of sulfite to sulfide. This is one of several activities required for the biosynthesis of L-cysteine from sulfate. The protein is Sulfite reductase [NADPH] hemoprotein beta-component of Methylocella silvestris (strain DSM 15510 / CIP 108128 / LMG 27833 / NCIMB 13906 / BL2).